Here is a 171-residue protein sequence, read N- to C-terminus: 3-hydroxydecanoyl-[acyl-carrier-protein] dehydratase (171 aa).

The active site involves H70.

The protein belongs to the thioester dehydratase family. FabA subfamily. As to quaternary structure, homodimer.

It localises to the cytoplasm. The catalysed reaction is a (3R)-hydroxyacyl-[ACP] = a (2E)-enoyl-[ACP] + H2O. It catalyses the reaction (3R)-hydroxydecanoyl-[ACP] = (2E)-decenoyl-[ACP] + H2O. The enzyme catalyses (2E)-decenoyl-[ACP] = (3Z)-decenoyl-[ACP]. Its pathway is lipid metabolism; fatty acid biosynthesis. Its function is as follows. Necessary for the introduction of cis unsaturation into fatty acids. Catalyzes the dehydration of (3R)-3-hydroxydecanoyl-ACP to E-(2)-decenoyl-ACP and then its isomerization to Z-(3)-decenoyl-ACP. Can catalyze the dehydratase reaction for beta-hydroxyacyl-ACPs with saturated chain lengths up to 16:0, being most active on intermediate chain length. This Stenotrophomonas maltophilia (strain R551-3) protein is 3-hydroxydecanoyl-[acyl-carrier-protein] dehydratase.